A 418-amino-acid chain; its full sequence is Fumarylacetoacetase (418 aa).

Aspartate 127 lines the Ca(2+) pocket. Histidine 134 acts as the Proton acceptor in catalysis. Ca(2+) contacts are provided by glutamate 200, glutamate 202, and aspartate 235. Residues aspartate 235, lysine 255, and threonine 259 each contribute to the Mg(2+) site.

It belongs to the FAH family. Ca(2+) serves as cofactor. Requires Mg(2+) as cofactor. Highly expressed in the intestine and the hypodermis.

The catalysed reaction is 4-fumarylacetoacetate + H2O = acetoacetate + fumarate + H(+). The protein operates within amino-acid degradation; L-phenylalanine degradation; acetoacetate and fumarate from L-phenylalanine: step 6/6. Fumarylacetoacetase involved in the tyrosine degradation pathway. In Caenorhabditis elegans, this protein is Fumarylacetoacetase.